Consider the following 507-residue polypeptide: GMP synthase [glutamine-hydrolyzing] (507 aa).

Residues 9 to 202 form the Glutamine amidotransferase type-1 domain; sequence TILIIDFGSQ…VHRIVGVKPG (194 aa). Cys-86 functions as the Nucleophile in the catalytic mechanism. Active-site residues include His-176 and Glu-178. The GMPS ATP-PPase domain occupies 203 to 395; the sequence is WTMGAYREQA…LGLPDSFIGR (193 aa). 230-236 is a binding site for ATP; sequence SGGVDSS.

In terms of assembly, homodimer.

It carries out the reaction XMP + L-glutamine + ATP + H2O = GMP + L-glutamate + AMP + diphosphate + 2 H(+). Its pathway is purine metabolism; GMP biosynthesis; GMP from XMP (L-Gln route): step 1/1. In terms of biological role, catalyzes the synthesis of GMP from XMP. The sequence is that of GMP synthase [glutamine-hydrolyzing] from Brucella melitensis biotype 1 (strain ATCC 23456 / CCUG 17765 / NCTC 10094 / 16M).